A 1828-amino-acid polypeptide reads, in one-letter code: Dedicator of cytokinesis protein 2 (1828 aa).

Positions 8–69 (DKERHGVAIY…PTSFIHLKEV (62 aa)) constitute an SH3 domain. N6-acetyllysine is present on K304. Positions 423 to 607 (RNDIYITLLQ…DVFSISTLVC (185 aa)) constitute a C2 DOCK-type domain. A phosphoserine mark is found at S588 and S593. K738 is modified (N6-acetyllysine). The DOCKER domain occupies 1210–1621 (YKDNNREEMY…VEKEYGVREM (412 aa)). The segment at 1652–1703 (SDCSTPSKVPAESFDLESAPPKTPKVEEEPISPGSTLPEVKLRRSKKRTKRS) is disordered. A phosphoserine mark is found at S1683, S1704, S1729, and S1782.

The protein belongs to the DOCK family. As to quaternary structure, homodimer. Interacts with RAC1 and RAC2. Interacts with CRKL and VAV. Interacts with CD3Z. Specifically expressed in hematopoietic cells.

The protein localises to the endomembrane system. It localises to the cytoplasm. The protein resides in the cytoskeleton. Its function is as follows. Involved in cytoskeletal rearrangements required for lymphocyte migration in response of chemokines. Activates RAC1 and RAC2, but not CDC42, by functioning as a guanine nucleotide exchange factor (GEF), which exchanges bound GDP for free GTP. May also participate in IL2 transcriptional activation via the activation of RAC2. This is Dedicator of cytokinesis protein 2 (Dock2) from Mus musculus (Mouse).